A 430-amino-acid chain; its full sequence is MANVVVVGAQWGDEGKGKIVDWLSEQADVVVRFQGGHNAGHTLVVGEAVYKLSLLPSGVVRPNTLGVIGNGVVLDPYALASEIDRLAGQGVTVSRENLRVADNATLILSLHRELDALREDGAPGTKIGTTKRGIGPAYEDKVGRRAIRLMDLAEPETLPPKIERLLAHHNALRRGFGLEEISEQTILDELTGIAERVLPYQDTVWRLLDDARRGGKRILFEGAQGALLDVDHGTYPFVTSSNTVAGQAATGSGLGPRAIGYVLGIAKAYTTRVGEGPFPTELHDEIGQRIGERGHEFGTVTGRKRRCGWFDACLVRQTVKTSGIDGIALTKLDVLDGFDEIRVCTAYDIDGQRFDHLPASQAAQQRAVPVYETIPGWSGTTAGARSWADLPAQAIKYVRRIEELIGAPVALLSTSPERDDTILMHNPFED.

Residues 12-18 (GDEGKGK) and 40-42 (GHT) each bind GTP. D13 functions as the Proton acceptor in the catalytic mechanism. 2 residues coordinate Mg(2+): D13 and G40. Residues 13–16 (DEGK), 38–41 (NAGH), T130, R144, Q224, T239, and R303 each bind IMP. The Proton donor role is filled by H41. 299 to 305 (TVTGRKR) provides a ligand contact to substrate. GTP contacts are provided by residues R305, 331 to 333 (KLD), and 413 to 415 (STS).

It belongs to the adenylosuccinate synthetase family. In terms of assembly, homodimer. Mg(2+) serves as cofactor.

It is found in the cytoplasm. It carries out the reaction IMP + L-aspartate + GTP = N(6)-(1,2-dicarboxyethyl)-AMP + GDP + phosphate + 2 H(+). It participates in purine metabolism; AMP biosynthesis via de novo pathway; AMP from IMP: step 1/2. Its function is as follows. Plays an important role in the de novo pathway of purine nucleotide biosynthesis. Catalyzes the first committed step in the biosynthesis of AMP from IMP. This Methylorubrum extorquens (strain CM4 / NCIMB 13688) (Methylobacterium extorquens) protein is Adenylosuccinate synthetase.